The primary structure comprises 619 residues: Chaperone protein HscA homolog (619 aa).

It belongs to the heat shock protein 70 family.

Functionally, chaperone involved in the maturation of iron-sulfur cluster-containing proteins. Has a low intrinsic ATPase activity which is markedly stimulated by HscB. This chain is Chaperone protein HscA homolog, found in Chromobacterium violaceum (strain ATCC 12472 / DSM 30191 / JCM 1249 / CCUG 213 / NBRC 12614 / NCIMB 9131 / NCTC 9757 / MK).